The following is a 169-amino-acid chain: S-ribosylhomocysteine lyase (169 aa).

Fe cation-binding residues include His-54, His-58, and Cys-128.

The protein belongs to the LuxS family. Homodimer. The cofactor is Fe cation.

It carries out the reaction S-(5-deoxy-D-ribos-5-yl)-L-homocysteine = (S)-4,5-dihydroxypentane-2,3-dione + L-homocysteine. Involved in the synthesis of autoinducer 2 (AI-2) which is secreted by bacteria and is used to communicate both the cell density and the metabolic potential of the environment. The regulation of gene expression in response to changes in cell density is called quorum sensing. Catalyzes the transformation of S-ribosylhomocysteine (RHC) to homocysteine (HC) and 4,5-dihydroxy-2,3-pentadione (DPD). This chain is S-ribosylhomocysteine lyase, found in Shewanella sp. (strain MR-4).